We begin with the raw amino-acid sequence, 298 residues long: Tryptophan 2,3-dioxygenase (298 aa).

Residues 51 to 55 (FIIQH), Tyr-113, and Arg-117 contribute to the substrate site. His-240 contacts heme. Thr-254 contacts substrate.

The protein belongs to the tryptophan 2,3-dioxygenase family. As to quaternary structure, homotetramer. Heme serves as cofactor.

The catalysed reaction is L-tryptophan + O2 = N-formyl-L-kynurenine. It participates in amino-acid degradation; L-tryptophan degradation via kynurenine pathway; L-kynurenine from L-tryptophan: step 1/2. Its function is as follows. Heme-dependent dioxygenase that catalyzes the oxidative cleavage of the L-tryptophan (L-Trp) pyrrole ring and converts L-tryptophan to N-formyl-L-kynurenine. Catalyzes the oxidative cleavage of the indole moiety. The polypeptide is Tryptophan 2,3-dioxygenase (Xanthomonas euvesicatoria pv. vesicatoria (strain 85-10) (Xanthomonas campestris pv. vesicatoria)).